The primary structure comprises 167 residues: Aphrodisin (167 aa).

Residues 1 to 16 (MVKILVLALVFSLAHA) form the signal peptide. Glutamine 17 carries the pyrrolidone carboxylic acid modification. 2 disulfides stabilise this stretch: cysteine 54–cysteine 58 and cysteine 73–cysteine 165. 2 N-linked (GlcNAc...) asparagine glycosylation sites follow: asparagine 57 and asparagine 85.

It belongs to the calycin superfamily. Lipocalin family. In terms of tissue distribution, expressed in the vagina, uterus, and Bartholin's glands of female hamsters. Secreted in vaginal discharge.

Its subcellular location is the secreted. Its function is as follows. Acts as an aphrodisiac pheromone, reliably eliciting copulatory behavior from male hamster. This is Aphrodisin from Mesocricetus auratus (Golden hamster).